Here is a 92-residue protein sequence, read N- to C-terminus: AFELTQTPASVEAAVGGTVTINCQASESISNWLAWYQQKPGQPXKLLIYKASTLASGVSSRFKGSGSGTQFTLTISDLECADAATYYCQSTD.

The framework-1 stretch occupies residues 1-23 (AFELTQTPASVEAAVGGTVTINC). The interval 24–34 (QASESISNWLA) is complementarity-determining-1. The interval 35 to 49 (WYQQKPGQPXKLLIY) is framework-2. The segment at 50-56 (KASTLAS) is complementarity-determining-2. Residues 57 to 88 (GVSSRFKGSGSGTQFTLTISDLECADAATYYC) are framework-3. Positions 89–92 (QSTD) are complementarity-determining-3.

This is Ig kappa chain V region 3381 from Oryctolagus cuniculus (Rabbit).